We begin with the raw amino-acid sequence, 143 residues long: Large ribosomal subunit protein uL11 (143 aa).

The protein belongs to the universal ribosomal protein uL11 family. In terms of assembly, part of the ribosomal stalk of the 50S ribosomal subunit. Interacts with L10 and the large rRNA to form the base of the stalk. L10 forms an elongated spine to which L12 dimers bind in a sequential fashion forming a multimeric L10(L12)X complex. One or more lysine residues are methylated.

Functionally, forms part of the ribosomal stalk which helps the ribosome interact with GTP-bound translation factors. The chain is Large ribosomal subunit protein uL11 from Verminephrobacter eiseniae (strain EF01-2).